We begin with the raw amino-acid sequence, 493 residues long: Alginate production protein AlgE (493 aa).

The first 25 residues, 1-25 (MKLNPLMAAGMGLGFTLFWACPTLA), serve as a signal peptide directing secretion. Polar residues predominate over residues 93–111 (DPLEQSNSDGSGTQTSRGT). The disordered stretch occupies residues 93–115 (DPLEQSNSDGSGTQTSRGTASER).

Belongs to the AlgE family.

The protein localises to the cell outer membrane. The protein operates within glycan biosynthesis; alginate biosynthesis. Functionally, has non-porin-like, channel-forming properties and probably functions as an alginate permeability pore. The chain is Alginate production protein AlgE (algE) from Pseudomonas syringae pv. tomato (strain ATCC BAA-871 / DC3000).